The following is a 396-amino-acid chain: B2 bradykinin receptor (396 aa).

Residues 1–65 (MDTRSSLCPK…EWWSWLNAIQ (65 aa)) are Extracellular-facing. Residues Asn-33 and Asn-44 are each glycosylated (N-linked (GlcNAc...) asparagine). A helical membrane pass occupies residues 66–89 (APFLWVLFLLAALENIFVLSVFCL). The Cytoplasmic portion of the chain corresponds to 90 to 98 (HKTNCTVAE). The helical transmembrane segment at 99-123 (IYLGNLAAADLILACGLPFWAITIA) threads the bilayer. Over 124 to 136 (NNFDWLFGEVLCR) the chain is Extracellular. Cys-135 and Cys-216 are disulfide-bonded. The chain crosses the membrane as a helical span at residues 137 to 158 (VVNTMIYMNLYSSICFLMLVSI). Residues 159–180 (DRYLALVKTMSMGRMRGVRWAK) lie on the Cytoplasmic side of the membrane. Tyr-161 carries the phosphotyrosine modification. Residues 181-203 (LYSLVIWSCTLLLSSPMLVFRTM) traverse the membrane as a helical segment. At 204-226 (KDYREEGHNVTACVIVYPSRSWE) the chain is on the extracellular side. The N-linked (GlcNAc...) asparagine glycan is linked to Asn-212. Residues 227-253 (VFTNMLLNLVGFLLPLSIITFCTVRIM) traverse the membrane as a helical segment. Over 254–272 (QVLRNNEMKKFKEVQTEKK) the chain is Cytoplasmic. Residues 273 to 297 (ATVLVLAVLGLFVLCWFPFQISTFL) traverse the membrane as a helical segment. The Extracellular portion of the chain corresponds to 298–316 (DTLLRLGVLSGCWNERAVD). A helical transmembrane segment spans residues 317–340 (IVTQISSYVAYSNSCLNPLVYVIV). Over 341 to 396 (GKRFRKKSREVYQAICRKGGCMGESVQMENSMGTLRTSISVDRQIHKLQDWAGNKQ) the chain is Cytoplasmic. Phosphotyrosine is present on Tyr-352. Cys-356 is lipidated: S-palmitoyl cysteine. Residues Ser-365 and Ser-371 each carry the phosphoserine modification. Thr-374 carries the post-translational modification Phosphothreonine. Phosphoserine; by GRK6 occurs at positions 378 and 380.

Belongs to the G-protein coupled receptor 1 family. Bradykinin receptor subfamily. BDKRB2 sub-subfamily. In terms of assembly, forms a complex with PECAM1 and GNAQ. Interacts with PECAM1. Diphosphorylation at Ser-365 and Ser-371, at Ser-378 and Ser-380, and at Thr-374 and Ser-380 seem to be correlated pairwise. Post-translationally, palmitoylation at Cys-356 and phosphorylation at Tyr-352 seem to be mutually exclusive. In terms of tissue distribution, uterus, vas deferens, kidney, ileum, heart, testis, lung and brain.

It localises to the cell membrane. Receptor for bradykinin. It is associated with G proteins that activate a phosphatidylinositol-calcium second messenger system. This chain is B2 bradykinin receptor (Bdkrb2), found in Rattus norvegicus (Rat).